A 344-amino-acid chain; its full sequence is Secreted LysM effector LysM2 (344 aa).

The N-terminal stretch at 1–24 (MMAPKSLQTGLLILLLAKLKLAWG) is a signal peptide. The LysM 1 domain occupies 36–80 (YEAAASSGDTCTSFAAEWGLTEETFASLNPSAACPSLVAGQNYCM). Low complexity predominate over residues 88-134 (STTSSSSSTTSSSTTSSSTTSSSTTSSSTTTSSFTTTTASETTSTAA). The disordered stretch occupies residues 88-141 (STTSSSSSTTSSSTTSSSTTSSSTTSSSTTTSSFTTTTASETTSTAANGVTTPM). 3 LysM domains span residues 153–199 (KFDL…YVCV), 216–262 (KFDL…YVCV), and 296–342 (KFWL…YICV).

Belongs to the secreted LysM effector family.

In terms of biological role, might have a role in sequestration of chitin oligosaccharides (breakdown products of fungal cell walls that are released during invasion and act as triggers of host immunity) to dampen host defense. The polypeptide is Secreted LysM effector LysM2 (Penicillium expansum (Blue mold rot fungus)).